The following is a 252-amino-acid chain: Probable transcriptional regulatory protein DSY2470 (252 aa).

It belongs to the TACO1 family.

The protein resides in the cytoplasm. This is Probable transcriptional regulatory protein DSY2470 from Desulfitobacterium hafniense (strain Y51).